Reading from the N-terminus, the 59-residue chain is Large ribosomal subunit protein uL30 (59 aa).

This sequence belongs to the universal ribosomal protein uL30 family. As to quaternary structure, part of the 50S ribosomal subunit.

This is Large ribosomal subunit protein uL30 from Macrococcus caseolyticus (strain JCSC5402) (Macrococcoides caseolyticum).